Reading from the N-terminus, the 277-residue chain is Release factor glutamine methyltransferase (277 aa).

S-adenosyl-L-methionine-binding positions include 120–124, Asp143, Trp171, and Asn186; that span reads GTGSG. Substrate is bound at residue 186 to 189; it reads NPPY.

This sequence belongs to the protein N5-glutamine methyltransferase family. PrmC subfamily.

The catalysed reaction is L-glutaminyl-[peptide chain release factor] + S-adenosyl-L-methionine = N(5)-methyl-L-glutaminyl-[peptide chain release factor] + S-adenosyl-L-homocysteine + H(+). Methylates the class 1 translation termination release factors RF1/PrfA and RF2/PrfB on the glutamine residue of the universally conserved GGQ motif. In Coxiella burnetii (strain RSA 493 / Nine Mile phase I), this protein is Release factor glutamine methyltransferase.